The sequence spans 214 residues: Adenylate kinase (214 aa).

ATP is bound at residue 10 to 15; that stretch reads GAGKGT. The NMP stretch occupies residues 30–59; that stretch reads STGDMLRAAVKAGTPLGLEAKKVMDAGQLV. AMP contacts are provided by residues Thr31, Arg36, 57–59, 85–88, and Gln92; these read QLV and GFPR. The LID stretch occupies residues 122 to 159; the sequence is GRRVHPGSGRVYHVVFNPPKVEGKDDVTGEDLAIRPDD. ATP is bound by residues Arg123 and 132-133; that span reads VY. Positions 156 and 167 each coordinate AMP. Gln200 contributes to the ATP binding site.

This sequence belongs to the adenylate kinase family. Monomer.

Its subcellular location is the cytoplasm. The enzyme catalyses AMP + ATP = 2 ADP. It participates in purine metabolism; AMP biosynthesis via salvage pathway; AMP from ADP: step 1/1. Functionally, catalyzes the reversible transfer of the terminal phosphate group between ATP and AMP. Plays an important role in cellular energy homeostasis and in adenine nucleotide metabolism. The sequence is that of Adenylate kinase from Shewanella sp. (strain ANA-3).